Consider the following 433-residue polypeptide: CinA-like protein (433 aa).

The protein belongs to the CinA family.

This chain is CinA-like protein, found in Prochlorococcus marinus subsp. pastoris (strain CCMP1986 / NIES-2087 / MED4).